A 103-amino-acid polypeptide reads, in one-letter code: V-type sodium ATPase subunit G (103 aa).

Belongs to the V-ATPase F subunit family.

In terms of biological role, involved in ATP-driven sodium extrusion. This is V-type sodium ATPase subunit G (ntpG) from Enterococcus hirae (strain ATCC 9790 / DSM 20160 / JCM 8729 / LMG 6399 / NBRC 3181 / NCIMB 6459 / NCDO 1258 / NCTC 12367 / WDCM 00089 / R).